The chain runs to 602 residues: Auxin response factor 18 (602 aa).

A DNA-binding region (TF-B3) is located at residues 128 to 230; it reads FVKILTASDT…DLRVGVRRLA (103 aa). The disordered stretch occupies residues 359–396; sequence TSPISTPAQQPQSKCKRSRPIEPSVKTPAPPSFLYSLP. Polar residues predominate over residues 360 to 371; it reads SPISTPAQQPQS. Positions 489–581 constitute a PB1 domain; sequence RSRTKVQMQG…EVKKMTTKLK (93 aa).

It belongs to the ARF family. As to quaternary structure, homodimers and heterodimers.

It localises to the nucleus. Auxin response factors (ARFs) are transcriptional factors that bind specifically to the DNA sequence 5'-TGTCTC-3' found in the auxin-responsive promoter elements (AuxREs). Could act as transcriptional activator or repressor. Formation of heterodimers with Aux/IAA proteins may alter their ability to modulate early auxin response genes expression. This chain is Auxin response factor 18 (ARF18), found in Arabidopsis thaliana (Mouse-ear cress).